Reading from the N-terminus, the 378-residue chain is Interleukin-3 receptor subunit alpha (378 aa).

A signal peptide spans 1 to 18 (MVLLWLTLLLIALPCLLQ). The Extracellular segment spans residues 19-305 (TKEDPNPPIT…EEGANTRAWR (287 aa)). Residues Asn46, Asn64, Asn80, and Asn109 are each glycosylated (N-linked (GlcNAc...) asparagine). Cystine bridges form between Cys52–Cys68, Cys76–Cys195, Cys112–Cys122, and Cys151–Cys165. 2 N-linked (GlcNAc...) asparagine glycosylation sites follow: Asn212 and Asn218. Cys217 and Cys293 form a disulfide bridge. The short motif at 282-286 (LSAWS) is the WSXWS motif element. The chain crosses the membrane as a helical span at residues 306–325 (TSLLIALGTLLALVCVFVIC). At 326–378 (RRYLVMQRLFPRIPHMKDPIGDSFQNDKLVVWEAGKAGLEECLVTEVQVVQKT) the chain is on the cytoplasmic side. A Box 1 motif motif is present at residues 334 to 342 (LFPRIPHMK).

It belongs to the type I cytokine receptor family. Type 5 subfamily. In terms of assembly, interacts with IL3. Heterodimer of an alpha and a beta subunit. The beta subunit is common to the IL3, IL5 and GM-CSF receptors. In terms of processing, ubiquitinated by RNFT2 in response to IL3. Ubiquitination leads ligand-induced degradation by the proteasome. Ubiquitinated by RNF128 via 'Lys-27'-linked polyubiquitination, facilitating its degradation through the lysosomal pathway.

The protein localises to the cell membrane. In terms of biological role, cell surface receptor for IL3 expressed on hematopoietic progenitor cells, monocytes and B-lymphocytes that controls the production and differentiation of hematopoietic progenitor cells into lineage-restricted cells. Ligand stimulation rapidly induces hetrodimerization with IL3RB, phosphorylation and enzyme activity of effector proteins such as JAK2 and PI3K that play a role in signaling cell proliferation and differentiation. Activation of JAK2 leads to STAT5-mediated transcriptional program. This is Interleukin-3 receptor subunit alpha from Homo sapiens (Human).